We begin with the raw amino-acid sequence, 406 residues long: Arginine deiminase (406 aa).

C396 acts as the Amidino-cysteine intermediate in catalysis.

Belongs to the arginine deiminase family.

It is found in the cytoplasm. It catalyses the reaction L-arginine + H2O = L-citrulline + NH4(+). It functions in the pathway amino-acid degradation; L-arginine degradation via ADI pathway; carbamoyl phosphate from L-arginine: step 1/2. In Vibrio vulnificus (strain YJ016), this protein is Arginine deiminase.